The sequence spans 449 residues: Kynurenine 3-monooxygenase (449 aa).

The protein belongs to the aromatic-ring hydroxylase family. KMO subfamily. Requires FAD as cofactor.

The catalysed reaction is L-kynurenine + NADPH + O2 + H(+) = 3-hydroxy-L-kynurenine + NADP(+) + H2O. It functions in the pathway cofactor biosynthesis; NAD(+) biosynthesis; quinolinate from L-kynurenine: step 1/3. Its function is as follows. Catalyzes the hydroxylation of L-kynurenine (L-Kyn) to form 3-hydroxy-L-kynurenine (L-3OHKyn). Required for synthesis of quinolinic acid. This is Kynurenine 3-monooxygenase from Cytophaga hutchinsonii (strain ATCC 33406 / DSM 1761 / CIP 103989 / NBRC 15051 / NCIMB 9469 / D465).